Consider the following 306-residue polypeptide: tRNA pseudouridine synthase B (306 aa).

The Nucleophile role is filled by D47.

This sequence belongs to the pseudouridine synthase TruB family. Type 1 subfamily.

The catalysed reaction is uridine(55) in tRNA = pseudouridine(55) in tRNA. In terms of biological role, responsible for synthesis of pseudouridine from uracil-55 in the psi GC loop of transfer RNAs. The sequence is that of tRNA pseudouridine synthase B from Neisseria gonorrhoeae (strain ATCC 700825 / FA 1090).